The sequence spans 321 residues: Acetyl-coenzyme A carboxylase carboxyl transferase subunit alpha (321 aa).

Residues 39 to 293 (RLQQKSQNLA…RRALGDALRQ (255 aa)) form the CoA carboxyltransferase C-terminal domain.

Belongs to the AccA family. Acetyl-CoA carboxylase is a heterohexamer composed of biotin carboxyl carrier protein (AccB), biotin carboxylase (AccC) and two subunits each of ACCase subunit alpha (AccA) and ACCase subunit beta (AccD).

It localises to the cytoplasm. It catalyses the reaction N(6)-carboxybiotinyl-L-lysyl-[protein] + acetyl-CoA = N(6)-biotinyl-L-lysyl-[protein] + malonyl-CoA. It functions in the pathway lipid metabolism; malonyl-CoA biosynthesis; malonyl-CoA from acetyl-CoA: step 1/1. Component of the acetyl coenzyme A carboxylase (ACC) complex. First, biotin carboxylase catalyzes the carboxylation of biotin on its carrier protein (BCCP) and then the CO(2) group is transferred by the carboxyltransferase to acetyl-CoA to form malonyl-CoA. The polypeptide is Acetyl-coenzyme A carboxylase carboxyl transferase subunit alpha (Bordetella bronchiseptica (strain ATCC BAA-588 / NCTC 13252 / RB50) (Alcaligenes bronchisepticus)).